The sequence spans 294 residues: ATP phosphoribosyltransferase (294 aa).

Belongs to the ATP phosphoribosyltransferase family. Long subfamily. It depends on Mg(2+) as a cofactor.

The protein resides in the cytoplasm. It catalyses the reaction 1-(5-phospho-beta-D-ribosyl)-ATP + diphosphate = 5-phospho-alpha-D-ribose 1-diphosphate + ATP. Its pathway is amino-acid biosynthesis; L-histidine biosynthesis; L-histidine from 5-phospho-alpha-D-ribose 1-diphosphate: step 1/9. With respect to regulation, feedback inhibited by histidine. In terms of biological role, catalyzes the condensation of ATP and 5-phosphoribose 1-diphosphate to form N'-(5'-phosphoribosyl)-ATP (PR-ATP). Has a crucial role in the pathway because the rate of histidine biosynthesis seems to be controlled primarily by regulation of HisG enzymatic activity. This Chlorobium luteolum (strain DSM 273 / BCRC 81028 / 2530) (Pelodictyon luteolum) protein is ATP phosphoribosyltransferase.